Here is a 228-residue protein sequence, read N- to C-terminus: Calcyclin-binding protein (228 aa).

An N-acetylmethionine modification is found at Met-1. Ala-2 carries the N-acetylalanine modification. Positions 2–80 are interaction with SIAH1; that stretch reads ASEELQKDLE…YTVKISNYGW (79 aa). Position 3 is a phosphoserine (Ser-3). An N6-acetyllysine mark is found at Lys-8 and Lys-19. Ser-34 is subject to Phosphoserine. One can recognise a CS domain in the interval 73-167; the sequence is VKISNYGWDQ…VENTRWDYLT (95 aa). Residues 73 to 228 are interaction with SKP1; that stretch reads VKISNYGWDQ…EKQAKGDTEF (156 aa). Residues Lys-85 and Lys-118 each carry the N6-acetyllysine modification. The tract at residues 154-228 is interaction with S100A6; the sequence is CRKKVENTRW…EKQAKGDTEF (75 aa). In terms of domain architecture, SGS spans 168–228; the sequence is QVEKECKEKE…EKQAKGDTEF (61 aa).

As to quaternary structure, homodimer. Interacts with proteins of the S100 family S100A1, S100A6, S100B, S100P and S100A12 in a calcium-dependent manner. Component of some large E3 complex at least composed of UBE2D1, SIAH1, CACYBP/SIP, SKP1, APC and TBL1X. Interacts directly with SIAH1, SIAH2 and SKP1. Post-translationally, phosphorylated on serine residues. Phosphorylated upon induction by RA or at high calcium concentrations.

Its subcellular location is the nucleus. The protein resides in the cytoplasm. Its function is as follows. May be involved in calcium-dependent ubiquitination and subsequent proteasomal degradation of target proteins. Probably serves as a molecular bridge in ubiquitin E3 complexes. Participates in the ubiquitin-mediated degradation of beta-catenin (CTNNB1). The polypeptide is Calcyclin-binding protein (CACYBP) (Homo sapiens (Human)).